The primary structure comprises 180 residues: Small ribosomal subunit protein uS5 (180 aa).

Residues 24–87 enclose the S5 DRBM domain; the sequence is MIEKLVAVNR…EQARKNLVSV (64 aa).

It belongs to the universal ribosomal protein uS5 family. Part of the 30S ribosomal subunit. Contacts proteins S4 and S8.

Its function is as follows. With S4 and S12 plays an important role in translational accuracy. Located at the back of the 30S subunit body where it stabilizes the conformation of the head with respect to the body. The polypeptide is Small ribosomal subunit protein uS5 (Stenotrophomonas maltophilia (strain R551-3)).